We begin with the raw amino-acid sequence, 318 residues long: Pantothenate kinase (318 aa).

96 to 103 (GSVAVGKS) lines the ATP pocket.

Belongs to the prokaryotic pantothenate kinase family.

Its subcellular location is the cytoplasm. The catalysed reaction is (R)-pantothenate + ATP = (R)-4'-phosphopantothenate + ADP + H(+). It functions in the pathway cofactor biosynthesis; coenzyme A biosynthesis; CoA from (R)-pantothenate: step 1/5. The chain is Pantothenate kinase from Rhodopseudomonas palustris (strain BisB5).